Reading from the N-terminus, the 241-residue chain is MATVSMRDMLKAGVHFGHQTRYWNPKMKPFIFGARNKVHIINLEKTVPMFNDALAELSKIASRKGKILFVGTKRAASEAVKDAANNCDQFFVNHRWLGGMLTNWKTVRQSIKRLKDLETQSQDGTFDKLTKKEALMRTRELDKLENSLGGIKDMGGLPDALFVIDADHEHIAIKEANNLGIPVFAVVDTNSDPDGVDYIIPGNDDAIRAVSLYLSAVATAVREGRSQDLAVQAEEGLVEAE.

It belongs to the universal ribosomal protein uS2 family.

The sequence is that of Small ribosomal subunit protein uS2 from Pectobacterium carotovorum subsp. carotovorum (strain PC1).